We begin with the raw amino-acid sequence, 102 residues long: Large ribosomal subunit protein bL21 (102 aa).

It belongs to the bacterial ribosomal protein bL21 family. Part of the 50S ribosomal subunit. Contacts protein L20.

In terms of biological role, this protein binds to 23S rRNA in the presence of protein L20. The sequence is that of Large ribosomal subunit protein bL21 from Pseudarthrobacter chlorophenolicus (strain ATCC 700700 / DSM 12829 / CIP 107037 / JCM 12360 / KCTC 9906 / NCIMB 13794 / A6) (Arthrobacter chlorophenolicus).